We begin with the raw amino-acid sequence, 474 residues long: Shufflon protein A (474 aa).

The tract at residues 1–361 is constant region; that stretch reads MKKYDRGWAS…TGAILSCQSG (361 aa). A variable region region spans residues 362–474; sequence TWKTSGSLNG…GVFSVFGYQT (113 aa).

This chain is Shufflon protein A, found in Escherichia coli.